The following is a 393-amino-acid chain: S-adenosylmethionine synthase (393 aa).

His16 is an ATP binding site. Asp18 is a Mg(2+) binding site. Residue Glu44 coordinates K(+). Residues Glu57 and Gln100 each coordinate L-methionine. The segment at 100–110 is flexible loop; the sequence is QSPDIVMGVDG. ATP contacts are provided by residues 165–167, 231–232, Asp240, 246–247, and Lys267; these read DAK, RF, and RK. Asp240 provides a ligand contact to L-methionine. Lys271 contributes to the L-methionine binding site.

It belongs to the AdoMet synthase family. In terms of assembly, homotetramer; dimer of dimers. Mg(2+) serves as cofactor. Requires K(+) as cofactor.

Its subcellular location is the cytoplasm. The catalysed reaction is L-methionine + ATP + H2O = S-adenosyl-L-methionine + phosphate + diphosphate. Its pathway is amino-acid biosynthesis; S-adenosyl-L-methionine biosynthesis; S-adenosyl-L-methionine from L-methionine: step 1/1. Its function is as follows. Catalyzes the formation of S-adenosylmethionine (AdoMet) from methionine and ATP. The overall synthetic reaction is composed of two sequential steps, AdoMet formation and the subsequent tripolyphosphate hydrolysis which occurs prior to release of AdoMet from the enzyme. This Coxiella burnetii (strain Dugway 5J108-111) protein is S-adenosylmethionine synthase.